The following is a 96-amino-acid chain: NADH-ubiquinone oxidoreductase chain 4L (96 aa).

3 helical membrane passes run 2–22, 28–48, and 62–82; these read IMIL…FCFV, LLSM…MLFI, and MFLT…VSMI.

Belongs to the complex I subunit 4L family.

It localises to the mitochondrion membrane. It carries out the reaction a ubiquinone + NADH + 5 H(+)(in) = a ubiquinol + NAD(+) + 4 H(+)(out). Functionally, core subunit of the mitochondrial membrane respiratory chain NADH dehydrogenase (Complex I) that is believed to belong to the minimal assembly required for catalysis. Complex I functions in the transfer of electrons from NADH to the respiratory chain. The immediate electron acceptor for the enzyme is believed to be ubiquinone. The chain is NADH-ubiquinone oxidoreductase chain 4L (mt:ND4L) from Drosophila melanogaster (Fruit fly).